Reading from the N-terminus, the 210-residue chain is Ribosomal RNA large subunit methyltransferase E (210 aa).

S-adenosyl-L-methionine-binding residues include glycine 55, tryptophan 57, aspartate 75, aspartate 93, and aspartate 117. The active-site Proton acceptor is lysine 157. The tract at residues 175 to 210 (YRQVKTTKPPSSRKKSSEMYVVGLDFKPKKNKKSKD) is disordered.

Belongs to the class I-like SAM-binding methyltransferase superfamily. RNA methyltransferase RlmE family.

It is found in the cytoplasm. The catalysed reaction is uridine(2552) in 23S rRNA + S-adenosyl-L-methionine = 2'-O-methyluridine(2552) in 23S rRNA + S-adenosyl-L-homocysteine + H(+). Functionally, specifically methylates the uridine in position 2552 of 23S rRNA at the 2'-O position of the ribose in the fully assembled 50S ribosomal subunit. The polypeptide is Ribosomal RNA large subunit methyltransferase E (Methanobrevibacter smithii (strain ATCC 35061 / DSM 861 / OCM 144 / PS)).